A 661-amino-acid polypeptide reads, in one-letter code: Transketolase (661 aa).

Residue Ser2 is modified to N-acetylserine. His31 lines the substrate pocket. Residues His71 and Gly119–Leu121 each bind thiamine diphosphate. Asp160 provides a ligand contact to Mg(2+). 2 residues coordinate thiamine diphosphate: Gly161 and Asn190. Residues Asn190 and Val192 each coordinate Mg(2+). Residues His267, Arg359, and Ser386 each contribute to the substrate site. His267 lines the thiamine diphosphate pocket. The active-site Proton donor is the Glu413. Residue Phe439 coordinates thiamine diphosphate. Substrate is bound by residues His463, Asp471, and Arg522.

This sequence belongs to the transketolase family. Homodimer. The cofactor is Mg(2+). Ca(2+) serves as cofactor. It depends on Mn(2+) as a cofactor. Co(2+) is required as a cofactor. Requires thiamine diphosphate as cofactor.

The enzyme catalyses D-sedoheptulose 7-phosphate + D-glyceraldehyde 3-phosphate = aldehydo-D-ribose 5-phosphate + D-xylulose 5-phosphate. Functionally, catalyzes the transfer of a two-carbon ketol group from a ketose donor to an aldose acceptor, via a covalent intermediate with the cofactor thiamine pyrophosphate. The polypeptide is Transketolase (tkt-1) (Dictyostelium discoideum (Social amoeba)).